The sequence spans 237 residues: Ribosomal RNA large subunit methyltransferase E (237 aa).

The S-adenosyl-L-methionine site is built by glycine 80, tryptophan 82, aspartate 108, aspartate 124, and aspartate 148. The active-site Proton acceptor is lysine 188.

This sequence belongs to the class I-like SAM-binding methyltransferase superfamily. RNA methyltransferase RlmE family.

The protein resides in the cytoplasm. It carries out the reaction uridine(2552) in 23S rRNA + S-adenosyl-L-methionine = 2'-O-methyluridine(2552) in 23S rRNA + S-adenosyl-L-homocysteine + H(+). In terms of biological role, specifically methylates the uridine in position 2552 of 23S rRNA at the 2'-O position of the ribose in the fully assembled 50S ribosomal subunit. The protein is Ribosomal RNA large subunit methyltransferase E of Jannaschia sp. (strain CCS1).